We begin with the raw amino-acid sequence, 220 residues long: MSHSPDLKGSSFTLSVLHLCNNSVDTAIEFVKEKVEQAPAFFAAAPVVINIANVEGDLDFVALKQGISQAGFIPVGITGAKDKRTQNLASDAGFAIMSASKSPTQAPAKMAPTKIVRTPIRSGQQIYAKDGDLVILNHVSAGAEVIADGSIHIHGTLRGRAIAGASGQKEARIICHDLQAELISIAGNYWLSDQIERQFWQQKVMLSLVDESLHLEALTQ.

This sequence belongs to the MinC family. Interacts with MinD and FtsZ.

Cell division inhibitor that blocks the formation of polar Z ring septums. Rapidly oscillates between the poles of the cell to destabilize FtsZ filaments that have formed before they mature into polar Z rings. Prevents FtsZ polymerization. The protein is Probable septum site-determining protein MinC of Vibrio vulnificus (strain CMCP6).